Consider the following 145-residue polypeptide: UPF0310 protein Mvan_0064 (145 aa).

The protein belongs to the UPF0310 family.

The protein is UPF0310 protein Mvan_0064 of Mycolicibacterium vanbaalenii (strain DSM 7251 / JCM 13017 / BCRC 16820 / KCTC 9966 / NRRL B-24157 / PYR-1) (Mycobacterium vanbaalenii).